We begin with the raw amino-acid sequence, 105 residues long: Large ribosomal subunit protein uL24 (105 aa).

The protein belongs to the universal ribosomal protein uL24 family. In terms of assembly, part of the 50S ribosomal subunit.

Functionally, one of two assembly initiator proteins, it binds directly to the 5'-end of the 23S rRNA, where it nucleates assembly of the 50S subunit. One of the proteins that surrounds the polypeptide exit tunnel on the outside of the subunit. The polypeptide is Large ribosomal subunit protein uL24 (Cellvibrio japonicus (strain Ueda107) (Pseudomonas fluorescens subsp. cellulosa)).